Here is a 419-residue protein sequence, read N- to C-terminus: [Butirosin acyl-carrier protein]--L-glutamate ligase (419 aa).

In terms of domain architecture, ATP-grasp spans arginine 144–asparagine 345. Isoleucine 174 to leucine 231 lines the ATP pocket. Residues aspartate 298, glutamate 312, and asparagine 314 each coordinate Mg(2+). Mn(2+)-binding residues include aspartate 298, glutamate 312, and asparagine 314.

In terms of assembly, monomer. The cofactor is Mg(2+). Mn(2+) serves as cofactor.

It catalyses the reaction holo-[BtrI ACP] + L-glutamate + ATP = gamma-L-glutamyl-[BtrI ACP] + ADP + phosphate. The catalysed reaction is 4-aminobutanoyl-[BtrI ACP] + L-glutamate + ATP = 4-(gamma-L-glutamylamino)butanoyl-[BtrI ACP] + ADP + phosphate + H(+). The protein operates within antibiotic biosynthesis; butirosin biosynthesis. ATP-dependent ligase that catalyzes 2 steps in the biosynthesis of the side chain of the aminoglycoside antibiotics in the biosynthetic pathway of butirosin. Mediates the addition of one molecule of L-glutamate to a dedicated acyl-carrier protein. Following decarboxylation of the product by BtrK, adds a second L-glutamate molecule. This chain is [Butirosin acyl-carrier protein]--L-glutamate ligase (btrJ), found in Niallia circulans (Bacillus circulans).